Here is a 456-residue protein sequence, read N- to C-terminus: tRNA modification GTPase MnmE (456 aa).

(6S)-5-formyl-5,6,7,8-tetrahydrofolate-binding residues include arginine 24, glutamate 81, and lysine 120. The region spanning 216–379 (GMKVVIAGRP…LREHLKECIG (164 aa)) is the TrmE-type G domain. Asparagine 226 is a K(+) binding site. Residues 226 to 231 (NAGKSS), 245 to 251 (TAIEGTT), and 270 to 273 (DTAG) each bind GTP. Serine 230 is a binding site for Mg(2+). Threonine 245, isoleucine 247, and threonine 250 together coordinate K(+). Threonine 251 serves as a coordination point for Mg(2+). Lysine 456 provides a ligand contact to (6S)-5-formyl-5,6,7,8-tetrahydrofolate.

This sequence belongs to the TRAFAC class TrmE-Era-EngA-EngB-Septin-like GTPase superfamily. TrmE GTPase family. In terms of assembly, homodimer. Heterotetramer of two MnmE and two MnmG subunits. K(+) is required as a cofactor.

Its subcellular location is the cytoplasm. Its function is as follows. Exhibits a very high intrinsic GTPase hydrolysis rate. Involved in the addition of a carboxymethylaminomethyl (cmnm) group at the wobble position (U34) of certain tRNAs, forming tRNA-cmnm(5)s(2)U34. This Marinobacter nauticus (strain ATCC 700491 / DSM 11845 / VT8) (Marinobacter aquaeolei) protein is tRNA modification GTPase MnmE.